A 460-amino-acid polypeptide reads, in one-letter code: Ammonium transporter Rh type B-B (460 aa).

The Cytoplasmic segment spans residues M1–I10. The chain crosses the membrane as a helical span at residues K11–V31. Residues R32 to Y62 are Extracellular-facing. The N-linked (GlcNAc...) asparagine glycan is linked to N48. The chain crosses the membrane as a helical span at residues P63 to L83. The Cytoplasmic portion of the chain corresponds to K84–G87. Residues F88–I108 traverse the membrane as a helical segment. Over Q109–E125 the chain is Extracellular. Residues S126–G146 form a helical membrane-spanning segment. The Cytoplasmic segment spans residues K147–P150. A helical membrane pass occupies residues V151–I171. Over L172–D179 the chain is Extracellular. The helical transmembrane segment at A180–Y202 threads the bilayer. Over R203–D220 the chain is Cytoplasmic. A helical membrane pass occupies residues L221 to V241. Residues T242–V252 are Extracellular-facing. A helical membrane pass occupies residues M253 to L273. The Cytoplasmic portion of the chain corresponds to N274–H283. Residues I284–T304 traverse the membrane as a helical segment. P305 is a topological domain (extracellular). Residues F306 to L326 form a helical membrane-spanning segment. The Cytoplasmic portion of the chain corresponds to T327–G347. Residues M348–I368 traverse the membrane as a helical segment. Residues Y369–Q394 are Extracellular-facing. Residues F395–I415 traverse the membrane as a helical segment. Residues L416–A460 lie on the Cytoplasmic side of the membrane.

It belongs to the ammonium transporter (TC 2.A.49) family. Rh subfamily.

It is found in the basolateral cell membrane. Its subcellular location is the cytoplasmic vesicle membrane. Functions as a specific ammonium transporter. This Xenopus laevis (African clawed frog) protein is Ammonium transporter Rh type B-B (rhbg-b).